The sequence spans 344 residues: DNA polymerase IV (344 aa).

The UmuC domain occupies Ile-2–Gly-183. Mg(2+)-binding residues include Asp-6 and Asp-105. Residue Glu-106 is part of the active site.

Belongs to the DNA polymerase type-Y family. Monomer. Mg(2+) serves as cofactor.

The protein localises to the cytoplasm. It carries out the reaction DNA(n) + a 2'-deoxyribonucleoside 5'-triphosphate = DNA(n+1) + diphosphate. Its function is as follows. Poorly processive, error-prone DNA polymerase involved in untargeted mutagenesis. Copies undamaged DNA at stalled replication forks, which arise in vivo from mismatched or misaligned primer ends. These misaligned primers can be extended by PolIV. Exhibits no 3'-5' exonuclease (proofreading) activity. May be involved in translesional synthesis. In Picrophilus torridus (strain ATCC 700027 / DSM 9790 / JCM 10055 / NBRC 100828 / KAW 2/3), this protein is DNA polymerase IV.